Consider the following 247-residue polypeptide: TLC domain-containing protein 1 (247 aa).

Positions 1–27 (MPLLFHPAWPLLLGATLTFRALRRVLC) are cleaved as a signal peptide. Over 28-46 (RLPQPAHVQTDPLRTWRWH) the chain is Extracellular. One can recognise a TLC domain in the interval 40-234 (LRTWRWHNLL…LLRSDFCPER (195 aa)). A helical membrane pass occupies residues 47-67 (NLLVSFTHSIVSGIWALLCLW). Topologically, residues 68 to 83 (QTPEMLVEIETAWSAS) are cytoplasmic. A helical transmembrane segment spans residues 84 to 104 (GYLLVCFSAGYFIHDTVDIVV). Residues 105-123 (SKQTRASWEYLVHHVMAMG) lie on the Extracellular side of the membrane. Residues 124–144 (AFFSGIFWKRFVGGGVLTLLV) constitute an intramembrane region (helical). Residues 145 to 173 (EVSNIFLTLRMMMKINNAQDLLLYKVNKY) lie on the Extracellular side of the membrane. Residues 174–194 (INLVMYFLFRLAPQAYLTKFF) traverse the membrane as a helical segment. Residues 195–201 (LQYAGQR) are Cytoplasmic-facing. The chain crosses the membrane as a helical span at residues 202–222 (TLGTFLLAILLMLDLMIIIYF). Topologically, residues 223–247 (SRLLRSDFCPERAPRRQQKDKFLTE) are extracellular.

The protein resides in the cell membrane. In terms of biological role, regulates the composition and fluidity of the plasma membrane. Inhibits the incorporation of membrane-fluidizing phospholipids containing omega-3 long-chain polyunsaturated fatty acids (LCPUFA) and thereby promotes membrane rigidity. Does not appear to have any effect on LCPUFA synthesis. In Mus musculus (Mouse), this protein is TLC domain-containing protein 1 (Tlcd1).